The following is a 331-amino-acid chain: Adenosine deaminase (331 aa).

Zn(2+) contacts are provided by His-12 and His-14. The substrate site is built by His-14, Asp-16, and Gly-170. His-197 provides a ligand contact to Zn(2+). The active-site Proton donor is the Glu-200. Asp-278 contacts Zn(2+).

The protein belongs to the metallo-dependent hydrolases superfamily. Adenosine and AMP deaminases family. Adenosine deaminase subfamily. It depends on Zn(2+) as a cofactor.

It carries out the reaction adenosine + H2O + H(+) = inosine + NH4(+). The enzyme catalyses 2'-deoxyadenosine + H2O + H(+) = 2'-deoxyinosine + NH4(+). In terms of biological role, catalyzes the hydrolytic deamination of adenosine and 2-deoxyadenosine. This Vibrio vulnificus (strain YJ016) protein is Adenosine deaminase.